The chain runs to 1434 residues: DNA-directed RNA polymerase subunit beta' (1434 aa).

Zn(2+) is bound by residues Cys-70, Cys-72, Cys-85, and Cys-88. Positions 460, 462, and 464 each coordinate Mg(2+). Residues Cys-840, Cys-915, Cys-922, and Cys-925 each contribute to the Zn(2+) site.

It belongs to the RNA polymerase beta' chain family. In terms of assembly, the RNAP catalytic core consists of 2 alpha, 1 beta, 1 beta' and 1 omega subunit. When a sigma factor is associated with the core the holoenzyme is formed, which can initiate transcription. The cofactor is Mg(2+). Zn(2+) is required as a cofactor.

The catalysed reaction is RNA(n) + a ribonucleoside 5'-triphosphate = RNA(n+1) + diphosphate. In terms of biological role, DNA-dependent RNA polymerase catalyzes the transcription of DNA into RNA using the four ribonucleoside triphosphates as substrates. This is DNA-directed RNA polymerase subunit beta' from Aeromonas hydrophila subsp. hydrophila (strain ATCC 7966 / DSM 30187 / BCRC 13018 / CCUG 14551 / JCM 1027 / KCTC 2358 / NCIMB 9240 / NCTC 8049).